A 419-amino-acid chain; its full sequence is UPF0329 protein ECU07_1890/ECU10_0010 (419 aa).

Over residues 136–165 (RQRKREEETERSVKELVGDEEKAKSKEEKA) the composition is skewed to basic and acidic residues. The tract at residues 136–222 (RQRKREEETE…KGGKKKSKGG (87 aa)) is disordered. The span at 213-222 (KGGKKKSKGG) shows a compositional bias: basic residues.

It belongs to the UPF0329 family.

This Encephalitozoon cuniculi (strain GB-M1) (Microsporidian parasite) protein is UPF0329 protein ECU07_1890/ECU10_0010.